The sequence spans 219 residues: NAD(P)H-quinone oxidoreductase subunit I (219 aa).

4Fe-4S ferredoxin-type domains follow at residues 55 to 84 and 95 to 124; these read GRIH…VDWV and RNYS…MTEE. [4Fe-4S] cluster contacts are provided by cysteine 64, cysteine 67, cysteine 70, cysteine 74, cysteine 104, cysteine 107, cysteine 110, and cysteine 114. Positions 192 to 219 are disordered; it reads LKAAGSMKAAEDERESSSSASNMEESAG. The segment covering 208–219 has biased composition (low complexity); the sequence is SSSASNMEESAG.

The protein belongs to the complex I 23 kDa subunit family. In terms of assembly, NDH-1 is composed of at least 11 different subunits. [4Fe-4S] cluster is required as a cofactor.

It is found in the cellular thylakoid membrane. It catalyses the reaction a plastoquinone + NADH + (n+1) H(+)(in) = a plastoquinol + NAD(+) + n H(+)(out). It carries out the reaction a plastoquinone + NADPH + (n+1) H(+)(in) = a plastoquinol + NADP(+) + n H(+)(out). NDH-1 shuttles electrons from an unknown electron donor, via FMN and iron-sulfur (Fe-S) centers, to quinones in the respiratory and/or the photosynthetic chain. The immediate electron acceptor for the enzyme in this species is believed to be plastoquinone. Couples the redox reaction to proton translocation, and thus conserves the redox energy in a proton gradient. This Synechococcus sp. (strain CC9311) protein is NAD(P)H-quinone oxidoreductase subunit I.